The sequence spans 20 residues: Unknown protein from 2D-PAGE of needles (20 aa).

This Pinus pinaster (Maritime pine) protein is Unknown protein from 2D-PAGE of needles.